Consider the following 213-residue polypeptide: Na(+)-translocating NADH-quinone reductase subunit D (213 aa).

Transmembrane regions (helical) follow at residues I21 to A41, I42 to L62, I77 to I97, L101 to L121, F131 to I151, E153 to S173, and L183 to V203.

This sequence belongs to the NqrDE/RnfAE family. As to quaternary structure, composed of six subunits; NqrA, NqrB, NqrC, NqrD, NqrE and NqrF.

Its subcellular location is the cell inner membrane. The enzyme catalyses a ubiquinone + n Na(+)(in) + NADH + H(+) = a ubiquinol + n Na(+)(out) + NAD(+). Functionally, NQR complex catalyzes the reduction of ubiquinone-1 to ubiquinol by two successive reactions, coupled with the transport of Na(+) ions from the cytoplasm to the periplasm. NqrA to NqrE are probably involved in the second step, the conversion of ubisemiquinone to ubiquinol. In Chlamydia pneumoniae (Chlamydophila pneumoniae), this protein is Na(+)-translocating NADH-quinone reductase subunit D.